A 206-amino-acid chain; its full sequence is RNA pyrophosphohydrolase (206 aa).

The region spanning 6–150 is the Nudix hydrolase domain; it reads GYRPNVGIVI…KRDVYRKVMK (145 aa). A Nudix box motif is present at residues 38–59; that stretch reads GGINEGENIETAMYRELYEEVG. Residues 162–191 are compositionally biased toward basic and acidic residues; it reads KPETVEKPRVERTEKRDFQKRDNQKREFRK. A disordered region spans residues 162–206; that stretch reads KPETVEKPRVERTEKRDFQKRDNQKREFRKSARMWNNSHQKGKAQ.

The protein belongs to the Nudix hydrolase family. RppH subfamily. The cofactor is a divalent metal cation.

Functionally, accelerates the degradation of transcripts by removing pyrophosphate from the 5'-end of triphosphorylated RNA, leading to a more labile monophosphorylated state that can stimulate subsequent ribonuclease cleavage. This Actinobacillus pleuropneumoniae serotype 5b (strain L20) protein is RNA pyrophosphohydrolase.